The following is a 2867-amino-acid chain: Reticulocyte-binding protein 2 (2867 aa).

An N-terminal signal peptide occupies residues 1 to 21; it reads MEKNVLWVIFYNFLVILLASC. Topologically, residues 22-2805 are extracellular; sequence NDSNRSKSNS…TAKEAIGKTR (2784 aa). 3 disordered regions span residues 52–73, 2650–2682, and 2712–2799; these read KYNNAKTEDNIGNQINNDNNHN, ETKTSPSGMKAKEEKVPPKETENRAQDNLASVP, and DNTH…TAKE. Residues 61-73 show a composition bias toward low complexity; it reads NIGNQINNDNNHN. The segment covering 2659-2674 has biased composition (basic and acidic residues); sequence KAKEEKVPPKETENRA. Residues 2725-2736 show a composition bias toward polar residues; that stretch reads DSISAPQEQVEY. The segment covering 2743 to 2754 has biased composition (acidic residues); sequence ENDETTEEESEH. Residues 2755-2799 show a composition bias toward basic and acidic residues; sequence DDAHDDTHDDTHDDTHDDTHDDTHDDTHDDTHDESQTGRDSTAKE. 7 consecutive repeat copies span residues 2758 to 2761, 2762 to 2765, 2766 to 2769, 2770 to 2773, 2774 to 2777, 2778 to 2781, and 2782 to 2785. The segment at 2758 to 2785 is 7 X 4 AA tandem repeats of H-D-D-T; that stretch reads HDDTHDDTHDDTHDDTHDDTHDDTHDDT. The chain crosses the membrane as a helical span at residues 2806 to 2826; it reads LAGAVIIAMSVLSGFIIIVFK. Residues 2827 to 2867 are Cytoplasmic-facing; sequence DKDEEEKDHNEHGYNEAFGEHDEYNMHDKEEVIEVCFNEED.

Its subcellular location is the cell membrane. In terms of biological role, involved in reticulocyte adhesion. Specifically binds to human reticulocyte cells. The polypeptide is Reticulocyte-binding protein 2 (RBP-2) (Plasmodium vivax (strain Belem)).